We begin with the raw amino-acid sequence, 281 residues long: RNA polymerase sigma factor RpoH (281 aa).

The segment at 52–121 (LILSHLRFVI…IHEYVLRNWR (70 aa)) is sigma-70 factor domain-2. The Interaction with polymerase core subunit RpoC motif lies at 76-79 (DLIQ). The tract at residues 226–277 (ALQSLDARSQDIIKARWLDDNKATLHDLAAKYNVSAERIRQLETNALKKLKS) is sigma-70 factor domain-4. A DNA-binding region (H-T-H motif) is located at residues 250 to 269 (LHDLAAKYNVSAERIRQLET).

It belongs to the sigma-70 factor family. RpoH subfamily. Interacts with the RNA polymerase core enzyme.

It localises to the cytoplasm. Functionally, sigma factors are initiation factors that promote the attachment of RNA polymerase to specific initiation sites and are then released. This sigma factor is involved in regulation of expression of heat shock genes. The polypeptide is RNA polymerase sigma factor RpoH (Haemophilus influenzae (strain ATCC 51907 / DSM 11121 / KW20 / Rd)).